A 99-amino-acid chain; its full sequence is Large ribosomal subunit protein eL21 (99 aa).

Over residues 1-18 (MVKHSRGNRTRSRKLLKK) the composition is skewed to basic residues. Positions 1–26 (MVKHSRGNRTRSRKLLKKSPRERGAV) are disordered.

The protein belongs to the eukaryotic ribosomal protein eL21 family.

The protein is Large ribosomal subunit protein eL21 of Metallosphaera sedula (strain ATCC 51363 / DSM 5348 / JCM 9185 / NBRC 15509 / TH2).